Consider the following 62-residue polypeptide: UPF0337 protein XAC0100 (62 aa).

This sequence belongs to the UPF0337 (CsbD) family.

This is UPF0337 protein XAC0100 from Xanthomonas axonopodis pv. citri (strain 306).